A 332-amino-acid chain; its full sequence is DNA-directed RNA polymerase 2A (332 aa).

Catalysis depends on residues D33, K108, and D265.

This sequence belongs to the phage and mitochondrial RNA polymerase family.

It catalyses the reaction RNA(n) + a ribonucleoside 5'-triphosphate = RNA(n+1) + diphosphate. Functionally, DNA-dependent RNA polymerase catalyzes the transcription of DNA into RNA using the four ribonucleoside triphosphates as substrates. This chain is DNA-directed RNA polymerase 2A (RPOT2-SYL), found in Nicotiana tabacum (Common tobacco).